Here is a 620-residue protein sequence, read N- to C-terminus: MYND-type zinc finger protein MUB1 (620 aa).

An MYND-type; degenerate zinc finger spans residues 514–555 (NFSCGKWEDFPRQFAKCRRCKRTKYCSRKCQLKAWGYHRYWC). The Zn(2+) site is built by Cys-530, Cys-533, His-551, and Cys-555. A compositionally biased stretch (polar residues) spans 563 to 606 (MRSTNTTTGVNTPNEPSSLNATATTAADVSNSTSTFTPNISTTV). The disordered stretch occupies residues 563 to 620 (MRSTNTTTGVNTPNEPSSLNATATTAADVSNSTSTFTPNISTTVPDEISNRDENSIPE). The segment covering 610–620 (ISNRDENSIPE) has biased composition (basic and acidic residues).

Belongs to the MUB1/samB family. Interacts with UBR2 and RPN4.

It localises to the cytoplasm. Functionally, involved in the determination of the onset of polarized growth. Required for the ubiquitin-dependent degradation of RPN4. Cooperates with UBR2 to transfer ubiquitin from RAD6 to RPN4. The polypeptide is MYND-type zinc finger protein MUB1 (MUB1) (Saccharomyces cerevisiae (strain ATCC 204508 / S288c) (Baker's yeast)).